Consider the following 152-residue polypeptide: 3-hydroxyacyl-[acyl-carrier-protein] dehydratase FabZ (152 aa).

Histidine 54 is an active-site residue.

The protein belongs to the thioester dehydratase family. FabZ subfamily.

Its subcellular location is the cytoplasm. It carries out the reaction a (3R)-hydroxyacyl-[ACP] = a (2E)-enoyl-[ACP] + H2O. Involved in unsaturated fatty acids biosynthesis. Catalyzes the dehydration of short chain beta-hydroxyacyl-ACPs and long chain saturated and unsaturated beta-hydroxyacyl-ACPs. The polypeptide is 3-hydroxyacyl-[acyl-carrier-protein] dehydratase FabZ (Shewanella woodyi (strain ATCC 51908 / MS32)).